A 182-amino-acid chain; its full sequence is Large ribosomal subunit protein uL6 (182 aa).

It belongs to the universal ribosomal protein uL6 family. In terms of assembly, part of the 50S ribosomal subunit.

Functionally, this protein binds to the 23S rRNA, and is important in its secondary structure. It is located near the subunit interface in the base of the L7/L12 stalk, and near the tRNA binding site of the peptidyltransferase center. The protein is Large ribosomal subunit protein uL6 of Dehalococcoides mccartyi (strain ATCC BAA-2100 / JCM 16839 / KCTC 5957 / BAV1).